The sequence spans 183 residues: Putative 3-methyladenine DNA glycosylase (183 aa).

This sequence belongs to the DNA glycosylase MPG family.

In Wolbachia pipientis subsp. Culex pipiens (strain wPip), this protein is Putative 3-methyladenine DNA glycosylase.